Reading from the N-terminus, the 202-residue chain is 3-isopropylmalate dehydratase small subunit (202 aa).

It belongs to the LeuD family. LeuD type 1 subfamily. As to quaternary structure, heterodimer of LeuC and LeuD.

The catalysed reaction is (2R,3S)-3-isopropylmalate = (2S)-2-isopropylmalate. It participates in amino-acid biosynthesis; L-leucine biosynthesis; L-leucine from 3-methyl-2-oxobutanoate: step 2/4. Catalyzes the isomerization between 2-isopropylmalate and 3-isopropylmalate, via the formation of 2-isopropylmaleate. This is 3-isopropylmalate dehydratase small subunit from Nocardia farcinica (strain IFM 10152).